The primary structure comprises 142 residues: Putative transmembrane protein INAFM1 (142 aa).

The segment covering 1–19 (MRGTSCVGGGAESPGGAGL) has biased composition (gly residues). Positions 1-22 (MRGTSCVGGGAESPGGAGLSEG) are disordered. Residues 36–56 (YFLCVSLAAVLLAVYYGLIWV) form a helical membrane-spanning segment. Disordered regions lie at residues 61–83 (PAAP…PGVP) and 99–142 (VPGG…RRPG). Residues 64–83 (PAGPQPSAPSPPCAARPGVP) show a composition bias toward pro residues. A compositionally biased stretch (low complexity) spans 99 to 111 (VPGGPRPQLQLPL). Residues 117 to 142 (YSDPDRRPSRQTPRETPEAAEGRRPG) show a composition bias toward basic and acidic residues.

The protein resides in the membrane. In Homo sapiens (Human), this protein is Putative transmembrane protein INAFM1.